The sequence spans 469 residues: Glutamate--tRNA ligase (469 aa).

Residues 11–21 carry the 'HIGH' region motif; that stretch reads PSPTGFIHLGN. A compositionally biased stretch (basic and acidic residues) spans 118 to 131; the sequence is GEKPRYDGTWRPEP. A disordered region spans residues 118-139; that stretch reads GEKPRYDGTWRPEPGKVLPEPP. The short motif at 243-247 is the 'KMSKS' region element; that stretch reads KMSKR. Residue Lys-246 coordinates ATP.

The protein belongs to the class-I aminoacyl-tRNA synthetase family. Glutamate--tRNA ligase type 1 subfamily. As to quaternary structure, monomer.

The protein resides in the cytoplasm. It catalyses the reaction tRNA(Glu) + L-glutamate + ATP = L-glutamyl-tRNA(Glu) + AMP + diphosphate. Catalyzes the attachment of glutamate to tRNA(Glu) in a two-step reaction: glutamate is first activated by ATP to form Glu-AMP and then transferred to the acceptor end of tRNA(Glu). The sequence is that of Glutamate--tRNA ligase from Burkholderia mallei (strain NCTC 10247).